Here is a 98-residue protein sequence, read N- to C-terminus: Complement inhibitor RaCI2 (98 aa).

Residues 1-21 form the signal peptide; the sequence is MNAVTVLAFTAFALIVHDCYS. Disulfide bonds link cysteine 35–cysteine 59, cysteine 40–cysteine 61, and cysteine 55–cysteine 76.

Belongs to the RaCI family. As to expression, expressed in salivary glands.

The protein localises to the secreted. Functionally, complement inhibitor. Prevents complement-mediated C5 activation by binding to C5. Binds C5 at a different binding site than the other tick complement inhibitors OmCI and CirpT1, and the drug eculizumab. The sequence is that of Complement inhibitor RaCI2 from Rhipicephalus microplus (Cattle tick).